A 187-amino-acid polypeptide reads, in one-letter code: Urease accessory protein UreE (187 aa).

The segment at 154-187 is disordered; it reads RANSAQGHGHSHGHSHSHDHHGYHHHGDGNWHKH. Positions 162–177 are enriched in basic residues; that stretch reads GHSHGHSHSHDHHGYH. Over residues 178 to 187 the composition is skewed to basic and acidic residues; that stretch reads HHGDGNWHKH.

Belongs to the UreE family.

The protein localises to the cytoplasm. Its function is as follows. Involved in urease metallocenter assembly. Binds nickel. Probably functions as a nickel donor during metallocenter assembly. The sequence is that of Urease accessory protein UreE from Actinobacillus pleuropneumoniae (Haemophilus pleuropneumoniae).